Here is a 144-residue protein sequence, read N- to C-terminus: Putative pre-16S rRNA nuclease (144 aa).

Belongs to the YqgF nuclease family.

Its subcellular location is the cytoplasm. Could be a nuclease involved in processing of the 5'-end of pre-16S rRNA. This chain is Putative pre-16S rRNA nuclease, found in Picosynechococcus sp. (strain ATCC 27264 / PCC 7002 / PR-6) (Agmenellum quadruplicatum).